The sequence spans 323 residues: Glutathione synthetase (323 aa).

Positions 133-317 (KMYALQFQSV…IGDQTIAALE (185 aa)) constitute an ATP-grasp domain. 159 to 215 (LDELRAAVLKPLGGKAGEGILFLDPGDRNFNSLVEISTQQGQLPVMVQQYLPEAKDG) lines the ATP pocket. Residues E288 and N290 each coordinate Mg(2+).

It belongs to the prokaryotic GSH synthase family. It depends on Mg(2+) as a cofactor. Requires Mn(2+) as cofactor.

It carries out the reaction gamma-L-glutamyl-L-cysteine + glycine + ATP = glutathione + ADP + phosphate + H(+). The protein operates within sulfur metabolism; glutathione biosynthesis; glutathione from L-cysteine and L-glutamate: step 2/2. The polypeptide is Glutathione synthetase (Synechococcus elongatus (strain ATCC 33912 / PCC 7942 / FACHB-805) (Anacystis nidulans R2)).